The following is a 258-amino-acid chain: Isoprenyl transferase 2 (258 aa).

Pro residues predominate over residues 1 to 18; that stretch reads MNFPPIHPSTPKMTPPDL. The segment at 1–21 is disordered; that stretch reads MNFPPIHPSTPKMTPPDLDPQ. Residue D32 is part of the active site. Position 32 (D32) interacts with Mg(2+). Substrate-binding positions include 33–36, W37, R45, H49, and 77–79; these read GNGR and STE. Residue N80 is the Proton acceptor of the active site. Residues W81, R83, R200, and 206–208 each bind substrate; that span reads RLS. E219 is a Mg(2+) binding site.

It belongs to the UPP synthase family. As to quaternary structure, homodimer. Mg(2+) serves as cofactor.

In terms of biological role, catalyzes the condensation of isopentenyl diphosphate (IPP) with allylic pyrophosphates generating different type of terpenoids. This chain is Isoprenyl transferase 2, found in Nostoc sp. (strain PCC 7120 / SAG 25.82 / UTEX 2576).